Here is a 234-residue protein sequence, read N- to C-terminus: Endo-1,4-beta-xylanase 1 (234 aa).

The N-terminal stretch at 1–21 is a signal peptide; sequence MVSFIFTRIILFAAAINGAVA. Asn-25 and Asn-75 each carry an N-linked (GlcNAc...) asparagine glycan. One can recognise a GH11 domain in the interval 38–234; it reads SGTPSSTGYS…SSGFSSITVA (197 aa). Glu-124 serves as the catalytic Nucleophile. N-linked (GlcNAc...) asparagine glycosylation occurs at Asn-167. Glu-221 acts as the Proton donor in catalysis.

Belongs to the glycosyl hydrolase 11 (cellulase G) family.

It is found in the secreted. The catalysed reaction is Endohydrolysis of (1-&gt;4)-beta-D-xylosidic linkages in xylans.. It functions in the pathway glycan degradation; xylan degradation. Its function is as follows. Endo-1,4-beta-xylanase involved in the hydrolysis of xylan, a major structural heterogeneous polysaccharide found in plant biomass representing the second most abundant polysaccharide in the biosphere, after cellulose. The polypeptide is Endo-1,4-beta-xylanase 1 (Xyn1) (Leucoagaricus gongylophorus (Leaf-cutting ant fungus)).